The following is a 196-amino-acid chain: Dual-action ribosomal maturation protein DarP (196 aa).

It belongs to the DarP family.

It localises to the cytoplasm. In terms of biological role, member of a network of 50S ribosomal subunit biogenesis factors which assembles along the 30S-50S interface, preventing incorrect 23S rRNA structures from forming. Promotes peptidyl transferase center (PTC) maturation. The polypeptide is Dual-action ribosomal maturation protein DarP (Stenotrophomonas maltophilia (strain R551-3)).